The sequence spans 67 residues: DNA-directed RNA polymerase subunit omega (67 aa).

The protein belongs to the RNA polymerase subunit omega family. As to quaternary structure, the RNAP catalytic core consists of 2 alpha, 1 beta, 1 beta' and 1 omega subunit. When a sigma factor is associated with the core the holoenzyme is formed, which can initiate transcription.

The catalysed reaction is RNA(n) + a ribonucleoside 5'-triphosphate = RNA(n+1) + diphosphate. Its function is as follows. Promotes RNA polymerase assembly. Latches the N- and C-terminal regions of the beta' subunit thereby facilitating its interaction with the beta and alpha subunits. The protein is DNA-directed RNA polymerase subunit omega of Methylibium petroleiphilum (strain ATCC BAA-1232 / LMG 22953 / PM1).